We begin with the raw amino-acid sequence, 204 residues long: High frequency lysogenization protein HflD homolog (204 aa).

This sequence belongs to the HflD family.

It is found in the cytoplasm. Its subcellular location is the cell inner membrane. This is High frequency lysogenization protein HflD homolog from Shewanella woodyi (strain ATCC 51908 / MS32).